The sequence spans 484 residues: Ribosomal RNA small subunit methyltransferase F (484 aa).

S-adenosyl-L-methionine contacts are provided by residues 126–132, Glu-150, Asp-177, and Asp-195; that span reads AAAPGSK. Cys-248 serves as the catalytic Nucleophile.

Belongs to the class I-like SAM-binding methyltransferase superfamily. RsmB/NOP family.

It is found in the cytoplasm. The enzyme catalyses cytidine(1407) in 16S rRNA + S-adenosyl-L-methionine = 5-methylcytidine(1407) in 16S rRNA + S-adenosyl-L-homocysteine + H(+). Functionally, specifically methylates the cytosine at position 1407 (m5C1407) of 16S rRNA. The chain is Ribosomal RNA small subunit methyltransferase F from Pectobacterium atrosepticum (strain SCRI 1043 / ATCC BAA-672) (Erwinia carotovora subsp. atroseptica).